The following is an 865-amino-acid chain: Ribosome biogenesis protein BOP1 homolog (865 aa).

2 disordered regions span residues 1–195 (MVAN…LKLG) and 207–240 (KTRG…EEDI). Acidic residues-rich tracts occupy residues 30–44 (LDES…ESDY), 57–79 (NEGE…DDVL), and 87–159 (DGEE…EEEA). Residues 160-180 (KENGKEKPAKAKAERKQREEQ) show a composition bias toward basic and acidic residues. WD repeat units follow at residues 526 to 565 (GHTS…CIRT), 567 to 607 (PTGD…YMLV), 651 to 693 (THFR…SQVP), 696 to 734 (KSKG…MMKK), 737 to 776 (PGCK…KPYQ), 780 to 819 (IHNA…DLLQ), and 835 to 865 (VNDF…RLYT).

The protein belongs to the WD repeat BOP1/ERB1 family.

The protein resides in the nucleus. Its subcellular location is the nucleolus. It localises to the nucleoplasm. Required for maturation of ribosomal RNAs and formation of the large ribosomal subunit. The polypeptide is Ribosome biogenesis protein BOP1 homolog (Anopheles gambiae (African malaria mosquito)).